A 317-amino-acid chain; its full sequence is 1-phosphofructokinase (317 aa).

Residues 223-228 and 254-255 contribute to the ATP site; these read SMGAEG and GD. Asp255 functions as the Proton acceptor in the catalytic mechanism.

The protein belongs to the carbohydrate kinase PfkB family.

It carries out the reaction beta-D-fructose 1-phosphate + ATP = beta-D-fructose 1,6-bisphosphate + ADP + H(+). In terms of biological role, catalyzes the ATP-dependent phosphorylation of fructose-l-phosphate to fructose-l,6-bisphosphate. This is 1-phosphofructokinase from Vibrio cholerae serotype O1 (strain ATCC 39315 / El Tor Inaba N16961).